The primary structure comprises 88 residues: DNA-directed RNA polymerase subunit omega (88 aa).

It belongs to the RNA polymerase subunit omega family. As to quaternary structure, the RNAP catalytic core consists of 2 alpha, 1 beta, 1 beta' and 1 omega subunit. When a sigma factor is associated with the core the holoenzyme is formed, which can initiate transcription.

The enzyme catalyses RNA(n) + a ribonucleoside 5'-triphosphate = RNA(n+1) + diphosphate. Its function is as follows. Promotes RNA polymerase assembly. Latches the N- and C-terminal regions of the beta' subunit thereby facilitating its interaction with the beta and alpha subunits. The chain is DNA-directed RNA polymerase subunit omega from Haemophilus influenzae (strain 86-028NP).